A 219-amino-acid polypeptide reads, in one-letter code: Translation initiation factor IF-3 (219 aa).

It belongs to the IF-3 family. As to quaternary structure, monomer.

The protein localises to the cytoplasm. IF-3 binds to the 30S ribosomal subunit and shifts the equilibrium between 70S ribosomes and their 50S and 30S subunits in favor of the free subunits, thus enhancing the availability of 30S subunits on which protein synthesis initiation begins. In Prochlorococcus marinus (strain MIT 9303), this protein is Translation initiation factor IF-3.